Reading from the N-terminus, the 67-residue chain is ATP synthase F(0) complex subunit 8 (67 aa).

Residues 8-24 (TWFTVILSMIISLFMLL) traverse the membrane as a helical segment. Residue Lys54 is modified to N6-acetyllysine; alternate. The residue at position 54 (Lys54) is an N6-succinyllysine; alternate. The residue at position 57 (Lys57) is an N6-acetyllysine.

It belongs to the ATPase protein 8 family. Component of the ATP synthase complex composed at least of ATP5F1A/subunit alpha, ATP5F1B/subunit beta, ATP5MC1/subunit c (homooctomer), MT-ATP6/subunit a, MT-ATP8/subunit 8, ATP5ME/subunit e, ATP5MF/subunit f, ATP5MG/subunit g, ATP5MK/subunit k, ATP5MJ/subunit j, ATP5F1C/subunit gamma, ATP5F1D/subunit delta, ATP5F1E/subunit epsilon, ATP5PF/subunit F6, ATP5PB/subunit b, ATP5PD/subunit d, ATP5PO/subunit OSCP. ATP synthase complex consists of a soluble F(1) head domain (subunits alpha(3) and beta(3)) - the catalytic core - and a membrane F(0) domain - the membrane proton channel (subunits c, a, 8, e, f, g, k and j). These two domains are linked by a central stalk (subunits gamma, delta, and epsilon) rotating inside the F1 region and a stationary peripheral stalk (subunits F6, b, d, and OSCP). Interacts with PRICKLE3.

The protein resides in the mitochondrion membrane. Functionally, subunit 8, of the mitochondrial membrane ATP synthase complex (F(1)F(0) ATP synthase or Complex V) that produces ATP from ADP in the presence of a proton gradient across the membrane which is generated by electron transport complexes of the respiratory chain. ATP synthase complex consist of a soluble F(1) head domain - the catalytic core - and a membrane F(1) domain - the membrane proton channel. These two domains are linked by a central stalk rotating inside the F(1) region and a stationary peripheral stalk. During catalysis, ATP synthesis in the catalytic domain of F(1) is coupled via a rotary mechanism of the central stalk subunits to proton translocation. In vivo, can only synthesize ATP although its ATP hydrolase activity can be activated artificially in vitro. Part of the complex F(0) domain. This is ATP synthase F(0) complex subunit 8 from Cavia porcellus (Guinea pig).